We begin with the raw amino-acid sequence, 267 residues long: Dihydropteroate synthase (267 aa).

A Pterin-binding domain is found at 1–251 (MTKTKIIGIL…NVDLNVKLAQ (251 aa)). Mg(2+) is bound at residue asparagine 11. Residues threonine 51, aspartate 84, asparagine 103, aspartate 167, lysine 203, and 239-241 (RVH) contribute to the (7,8-dihydropterin-6-yl)methyl diphosphate site.

The protein belongs to the DHPS family. Requires Mg(2+) as cofactor.

It carries out the reaction (7,8-dihydropterin-6-yl)methyl diphosphate + 4-aminobenzoate = 7,8-dihydropteroate + diphosphate. It participates in cofactor biosynthesis; tetrahydrofolate biosynthesis; 7,8-dihydrofolate from 2-amino-4-hydroxy-6-hydroxymethyl-7,8-dihydropteridine diphosphate and 4-aminobenzoate: step 1/2. Catalyzes the condensation of para-aminobenzoate (pABA) with 6-hydroxymethyl-7,8-dihydropterin diphosphate (DHPt-PP) to form 7,8-dihydropteroate (H2Pte), the immediate precursor of folate derivatives. This Staphylococcus haemolyticus protein is Dihydropteroate synthase (folP).